The sequence spans 521 residues: Cytochrome P450 1A1 (521 aa).

Position 229 (F229) interacts with substrate. C463 contributes to the heme binding site.

The protein belongs to the cytochrome P450 family. The cofactor is heme.

Its subcellular location is the endoplasmic reticulum membrane. It is found in the microsome membrane. It carries out the reaction an organic molecule + reduced [NADPH--hemoprotein reductase] + O2 = an alcohol + oxidized [NADPH--hemoprotein reductase] + H2O + H(+). In terms of biological role, cytochromes P450 are a group of heme-thiolate monooxygenases. They oxidize a variety of structurally unrelated compounds, including steroids, fatty acids, and xenobiotics. This chain is Cytochrome P450 1A1 (cyp1a1), found in Platichthys flesus (European flounder).